A 632-amino-acid chain; its full sequence is Biosynthetic arginine decarboxylase (632 aa).

Lysine 101 carries the N6-(pyridoxal phosphate)lysine modification. 281–291 (FDVGGGLGVDY) lines the substrate pocket.

This sequence belongs to the Orn/Lys/Arg decarboxylase class-II family. SpeA subfamily. It depends on Mg(2+) as a cofactor. The cofactor is pyridoxal 5'-phosphate.

The enzyme catalyses L-arginine + H(+) = agmatine + CO2. It participates in amine and polyamine biosynthesis; agmatine biosynthesis; agmatine from L-arginine: step 1/1. In terms of biological role, catalyzes the biosynthesis of agmatine from arginine. In Klebsiella pneumoniae (strain 342), this protein is Biosynthetic arginine decarboxylase.